A 276-amino-acid polypeptide reads, in one-letter code: Pantothenate synthetase (276 aa).

ATP is bound at residue 27–34 (MGALHRGH). Histidine 34 (proton donor) is an active-site residue. Glutamine 58 lines the (R)-pantoate pocket. Residue glutamine 58 participates in beta-alanine binding. 147-150 (GKKD) lines the ATP pocket. Residue glutamine 153 coordinates (R)-pantoate. Residues valine 176 and 184–187 (LSSR) contribute to the ATP site.

This sequence belongs to the pantothenate synthetase family. As to quaternary structure, homodimer.

The protein resides in the cytoplasm. It carries out the reaction (R)-pantoate + beta-alanine + ATP = (R)-pantothenate + AMP + diphosphate + H(+). It participates in cofactor biosynthesis; (R)-pantothenate biosynthesis; (R)-pantothenate from (R)-pantoate and beta-alanine: step 1/1. Its function is as follows. Catalyzes the condensation of pantoate with beta-alanine in an ATP-dependent reaction via a pantoyl-adenylate intermediate. In Helicobacter pylori (strain J99 / ATCC 700824) (Campylobacter pylori J99), this protein is Pantothenate synthetase.